A 161-amino-acid chain; its full sequence is TM2 domain-containing protein DDB_G0278163 (161 aa).

The Cytoplasmic segment spans residues 1–24; that stretch reads MGHHHHHHGGSGHHHHHHHHGSGH. A helical membrane pass occupies residues 25–45; the sequence is YGGGAVLVTPIVTPVPVVYGS. Residues 46-54 are Extracellular-facing; that stretch reads RSSSYCPKS. Residues 52–100 form the TM2 domain; it reads PKSMTVAYVLWFFFGILGFHRLYLGRVGTFFLYFFTAGVFGLGWLFDAF. The helical transmembrane segment at 55–75 threads the bilayer; sequence MTVAYVLWFFFGILGFHRLYL. Over 76-80 the chain is Cytoplasmic; sequence GRVGT. A helical transmembrane segment spans residues 81-101; it reads FFLYFFTAGVFGLGWLFDAFY. The Extracellular portion of the chain corresponds to 102–161; it reads THKMVKHYNECEFTKSCVGQSPPATIPIYQSEGAYPTYQQVPQQPPQFYQPQQQQPQYQP. Residues 139–161 are disordered; the sequence is YQQVPQQPPQFYQPQQQQPQYQP.

This sequence belongs to the TM2 family.

The protein localises to the membrane. The polypeptide is TM2 domain-containing protein DDB_G0278163 (Dictyostelium discoideum (Social amoeba)).